Here is a 427-residue protein sequence, read N- to C-terminus: 3-phosphoshikimate 1-carboxyvinyltransferase (427 aa).

3-phosphoshikimate contacts are provided by Lys20, Ser21, and Arg25. Lys20 lines the phosphoenolpyruvate pocket. Phosphoenolpyruvate is bound by residues Gly92 and Arg120. 3-phosphoshikimate-binding residues include Ser166, Gln168, Asp312, and Lys339. Gln168 contacts phosphoenolpyruvate. Asp312 (proton acceptor) is an active-site residue. Phosphoenolpyruvate contacts are provided by Arg343 and Arg385.

This sequence belongs to the EPSP synthase family. Monomer.

Its subcellular location is the cytoplasm. It catalyses the reaction 3-phosphoshikimate + phosphoenolpyruvate = 5-O-(1-carboxyvinyl)-3-phosphoshikimate + phosphate. It functions in the pathway metabolic intermediate biosynthesis; chorismate biosynthesis; chorismate from D-erythrose 4-phosphate and phosphoenolpyruvate: step 6/7. Its function is as follows. Catalyzes the transfer of the enolpyruvyl moiety of phosphoenolpyruvate (PEP) to the 5-hydroxyl of shikimate-3-phosphate (S3P) to produce enolpyruvyl shikimate-3-phosphate and inorganic phosphate. The sequence is that of 3-phosphoshikimate 1-carboxyvinyltransferase from Streptococcus equi subsp. zooepidemicus (strain H70).